The sequence spans 172 residues: Large ribosomal subunit protein uL10 (172 aa).

It belongs to the universal ribosomal protein uL10 family. Part of the ribosomal stalk of the 50S ribosomal subunit. The N-terminus interacts with L11 and the large rRNA to form the base of the stalk. The C-terminus forms an elongated spine to which L12 dimers bind in a sequential fashion forming a multimeric L10(L12)X complex.

Forms part of the ribosomal stalk, playing a central role in the interaction of the ribosome with GTP-bound translation factors. The sequence is that of Large ribosomal subunit protein uL10 from Francisella tularensis subsp. mediasiatica (strain FSC147).